The sequence spans 254 residues: 5-oxoprolinase subunit A (254 aa).

The protein belongs to the LamB/PxpA family. In terms of assembly, forms a complex composed of PxpA, PxpB and PxpC.

It carries out the reaction 5-oxo-L-proline + ATP + 2 H2O = L-glutamate + ADP + phosphate + H(+). Catalyzes the cleavage of 5-oxoproline to form L-glutamate coupled to the hydrolysis of ATP to ADP and inorganic phosphate. In Acinetobacter baylyi (strain ATCC 33305 / BD413 / ADP1), this protein is 5-oxoprolinase subunit A.